A 541-amino-acid polypeptide reads, in one-letter code: MLCSLLLCGCLLLITGYAHDDDWIDPTDMLNYDAASGTMRKSQAKYGTSEKKEVNPGLSDAQELSDCLQRLDSLTHKVDDCEKKKMKDYESQSNPVFRRYLNKILIEAGKLGLPDEDRVDVRYDAEILLTRQTLLEIQKFLSGEEWKPGALDDALSDILTNFKSHDAEAWKWQFEDYFGVDPYNVFMVLLCLLCIVALVATELWTYVRWHTQLKRVCIISFLVSLGWNWIYLYKVAFAQHQANVAKMAPLNDVCAKKMDWTENLWEWFRISWTYKDDPCQKYYELLIVNPIWLVPPTKALAVTFTNFVTEPLKYIGKGTGEFIKALMKEIPVLLQIPVLVILALAVLGFCYGAGQSVPMLRHFRGPEREPPRALEPDDRRRQKELDYRFHGGAGDADFSYRGPAGSIEQGPYDKMHVCERDVLRQRQVNMRFPSGNKSPEVLRAFDLPDTEAQEHPEVVPSHKPSIVNTSLKETSELPRESTLAECSQCAKDGSGQVPSTAESSPIVEKAQLKTDSECRPHSTEAAAAAARGTDPVSSPCG.

The N-terminal stretch at 1–18 is a signal peptide; that stretch reads MLCSLLLCGCLLLITGYA. The Lumenal portion of the chain corresponds to 19-184; sequence HDDDWIDPTD…EDYFGVDPYN (166 aa). A helical membrane pass occupies residues 185-205; sequence VFMVLLCLLCIVALVATELWT. Over 206-217 the chain is Cytoplasmic; it reads YVRWHTQLKRVC. The chain crosses the membrane as a helical span at residues 218–238; it reads IISFLVSLGWNWIYLYKVAFA. Topologically, residues 239-329 are lumenal; the sequence is QHQANVAKMA…GEFIKALMKE (91 aa). The helical transmembrane segment at 330–350 threads the bilayer; sequence IPVLLQIPVLVILALAVLGFC. Over 351-541 the chain is Cytoplasmic; the sequence is YGAGQSVPML…GTDPVSSPCG (191 aa). The interval 362–381 is disordered; sequence HFRGPEREPPRALEPDDRRR. Over residues 364–381 the composition is skewed to basic and acidic residues; it reads RGPEREPPRALEPDDRRR. S434 and S438 each carry phosphoserine. T482 is modified (phosphothreonine). Phosphoserine is present on S504. A compositionally biased stretch (basic and acidic residues) spans 511–522; the sequence is QLKTDSECRPHS. A disordered region spans residues 511 to 541; sequence QLKTDSECRPHSTEAAAAAARGTDPVSSPCG.

The protein belongs to the chloride channel MCLC family. In terms of assembly, homomultimers. Interacts with mitochondrial protein PIGBOS1 (via C-terminus); the interaction occurs at the mitochondria-associated endoplasmic reticulum (ER) membrane, a zone of contact between the ER and mitochondrial membranes, but does not appear to play a role in ER-mitochondria tethering and is not affected by ER stress. Interacts with CALR. In terms of tissue distribution, expressed in testis (spermatocytes), liver and lung (at protein level). Expressed in spleen, liver, testis, kidney, heart, brain and lung.

The protein resides in the endoplasmic reticulum membrane. The enzyme catalyses chloride(in) = chloride(out). The catalysed reaction is bromide(in) = bromide(out). It carries out the reaction nitrate(in) = nitrate(out). It catalyses the reaction fluoride(in) = fluoride(out). Its function is as follows. Anion-selective channel with Ca(2+)-dependent and voltage-independent gating. Permeable to small monovalent anions with selectivity for bromide &gt; chloride &gt; nitrate &gt; fluoride. Operates in the endoplasmic reticulum (ER) membrane where it mediates chloride efflux to compensate for the loss of positive charges from the ER lumen upon Ca(2+) release. Contributes to the maintenance of ER Ca(2+) pools and activation of unfolded protein response to prevent accumulation of misfolded proteins in the ER lumen. Particularly involved in ER homeostasis mechanisms underlying motor neurons and retinal photoreceptors survival. In Rattus norvegicus (Rat), this protein is Chloride channel CLIC-like protein 1.